Reading from the N-terminus, the 211-residue chain is Ribosomal RNA small subunit methyltransferase G (211 aa).

S-adenosyl-L-methionine-binding positions include G74, L79, 125 to 126 (AE), and R140.

Belongs to the methyltransferase superfamily. RNA methyltransferase RsmG family.

It localises to the cytoplasm. Its function is as follows. Specifically methylates the N7 position of guanine in position 518 of 16S rRNA. The sequence is that of Ribosomal RNA small subunit methyltransferase G from Clavibacter michiganensis subsp. michiganensis (strain NCPPB 382).